The primary structure comprises 291 residues: MAAGKEIRGKIKSVENTKKITKAMEMVAASKMRKAQERMRAARPYADKIRNITANLAQANPEYTHPFMAVSATAAKTAGFVVVTTDKGLCGGLNTNVLRAVTGKLRELESQGSKAEAVAIGNKGLGFLNRIGAKVVSHATQLGDAPHLERLIGPVKVLLDAYAEGKLNAVYLCYTRFINTMKQEPVVEQLLPLASDKLKADAGEHGWDYLYEPDAKTVIDDLLLRFVEALIYQAVAENMASEQSARMVAMKAATDNAGTLIGELKLVYNKTRQAAITKELSEIVSGAAAVG.

Belongs to the ATPase gamma chain family. As to quaternary structure, F-type ATPases have 2 components, CF(1) - the catalytic core - and CF(0) - the membrane proton channel. CF(1) has five subunits: alpha(3), beta(3), gamma(1), delta(1), epsilon(1). CF(0) has three main subunits: a, b and c.

It is found in the cell inner membrane. Functionally, produces ATP from ADP in the presence of a proton gradient across the membrane. The gamma chain is believed to be important in regulating ATPase activity and the flow of protons through the CF(0) complex. The chain is ATP synthase gamma chain from Methylibium petroleiphilum (strain ATCC BAA-1232 / LMG 22953 / PM1).